The chain runs to 403 residues: CCA-adding enzyme (403 aa).

ATP-binding residues include G32 and R35. The CTP site is built by G32 and R35. 2 residues coordinate Mg(2+): D45 and D47. Residues R116, D159, R162, R165, and R168 each contribute to the ATP site. CTP is bound by residues R116, D159, R162, R165, and R168.

The protein belongs to the tRNA nucleotidyltransferase/poly(A) polymerase family. Bacterial CCA-adding enzyme type 3 subfamily. Homodimer. Mg(2+) is required as a cofactor.

It carries out the reaction a tRNA precursor + 2 CTP + ATP = a tRNA with a 3' CCA end + 3 diphosphate. The catalysed reaction is a tRNA with a 3' CCA end + 2 CTP + ATP = a tRNA with a 3' CCACCA end + 3 diphosphate. Its function is as follows. Catalyzes the addition and repair of the essential 3'-terminal CCA sequence in tRNAs without using a nucleic acid template. Adds these three nucleotides in the order of C, C, and A to the tRNA nucleotide-73, using CTP and ATP as substrates and producing inorganic pyrophosphate. tRNA 3'-terminal CCA addition is required both for tRNA processing and repair. Also involved in tRNA surveillance by mediating tandem CCA addition to generate a CCACCA at the 3' terminus of unstable tRNAs. While stable tRNAs receive only 3'-terminal CCA, unstable tRNAs are marked with CCACCA and rapidly degraded. The polypeptide is CCA-adding enzyme (Streptococcus suis (strain 98HAH33)).